A 207-amino-acid polypeptide reads, in one-letter code: MVRGKIEIKKIENVTSRQVTFSKRRSGLFKKAHELSVLCDAQVAAIVFSQSGRLHEYSSSQMEKIIDRYGKFSNAFYVAERPQVERYLQELKMEIDRMVKKIDLLEVHHRKLLGQGLDSCSVTELQEIDTQIEKSLRIVRSRKAELYADQLKKLKEKERELLNERKRLLEEVNMHHSSKGNTEGGHRTKHSSEVETDLFIGLPVTRL.

An MADS-box domain is found at 1 to 61 (MVRGKIEIKK…GRLHEYSSSQ (61 aa)). The K-box domain occupies 88–178 (LQELKMEIDR…LEEVNMHHSS (91 aa)).

The protein resides in the nucleus. MADS-box transcription factor that acts with AGL42 and AGL72 in the control of flowering time. Promotes flowering at the shoot apical and axillary meristems. Seems to act through a gibberellin-dependent pathway. Interacts genetically with SOC1 and its expression is directly regulated by SOC1. In Arabidopsis thaliana (Mouse-ear cress), this protein is MADS-box protein AGL71 (AGL71).